A 401-amino-acid polypeptide reads, in one-letter code: MTLALFHNLTLASMTDGPTPYGLMPKGALVAEAGQVLWSGPQAELPAAFAAVPAHDLGRRLVTPALIDCHTHVVHGGNRANEFEMRLNGASYEEVARAGGGIVSTVSATRTATEAELLASALPRVDAMIAEGVAVIEVKSGYGLDIETELRMLRAARAIGQHRDVTIRTSFLGAHAVPADFAGRADAYIDTVAIPALRTAHAEGLVDAVDGFCEGIAFQPEQIARVFDVARDLGLPMKLHAEQLSNLGGTKLAASYGALSADHIEYLDEDGVAAMARAGMTAVILPGAFYTLRETQKPPVALLRKHRVPMAVSTDANPGSSPMTSLLLAMNMACTLFRLTPEEALAGTTRNAARALGMADRGTLAPGQRADLAVWDVAHPAELAYRIGFNPLYKRIIGGTL.

Positions 70 and 72 each coordinate Fe(3+). His-70 and His-72 together coordinate Zn(2+). Residues Arg-79, Tyr-142, and His-175 each coordinate 4-imidazolone-5-propanoate. Tyr-142 is an N-formimidoyl-L-glutamate binding site. His-240 is a Fe(3+) binding site. His-240 contacts Zn(2+). A 4-imidazolone-5-propanoate-binding site is contributed by Gln-243. Residue Asp-315 participates in Fe(3+) binding. Asp-315 lines the Zn(2+) pocket. Asn-317 and Gly-319 together coordinate N-formimidoyl-L-glutamate. Ser-320 contacts 4-imidazolone-5-propanoate.

This sequence belongs to the metallo-dependent hydrolases superfamily. HutI family. It depends on Zn(2+) as a cofactor. The cofactor is Fe(3+).

It localises to the cytoplasm. The enzyme catalyses 4-imidazolone-5-propanoate + H2O = N-formimidoyl-L-glutamate. Its pathway is amino-acid degradation; L-histidine degradation into L-glutamate; N-formimidoyl-L-glutamate from L-histidine: step 3/3. Functionally, catalyzes the hydrolytic cleavage of the carbon-nitrogen bond in imidazolone-5-propanoate to yield N-formimidoyl-L-glutamate. It is the third step in the universal histidine degradation pathway. This Ruegeria pomeroyi (strain ATCC 700808 / DSM 15171 / DSS-3) (Silicibacter pomeroyi) protein is Imidazolonepropionase.